A 471-amino-acid polypeptide reads, in one-letter code: Secretogranin-3 (471 aa).

The N-terminal stretch at 1 to 22 (MGFLWTGSWILVLVLNSGPIQA) is a signal peptide. Disordered stretches follow at residues 24 to 45 (PKPE…ERPL), 89 to 108 (TVEK…QLNV), and 345 to 404 (KLEK…TDEA). Residues 28–45 (GSQDKSLHNRELSAERPL) are compositionally biased toward basic and acidic residues. The residue at position 40 (Ser-40) is a Phosphoserine. An O-linked (Xyl...) (chondroitin sulfate) serine glycan is attached at Ser-40. Basic and acidic residues-rich tracts occupy residues 345-355 (KLEKNTTDSKS) and 364-404 (KSQE…TDEA). Residue Ser-365 is modified to Phosphoserine.

Interacts with CHGA. Interacts with secretogranin II/SCG2. Interacts (via C-terminus) with CPE. As to expression, expressed in various brain areas, with highest levels in the arcuate nucleus and the lateral hypothalamic area, as well as the paraventricular nucleus and the ventromedial hypothalamus (at protein level).

The protein resides in the cytoplasmic vesicle. It is found in the secretory vesicle. Its subcellular location is the secretory vesicle membrane. The protein localises to the secreted. Member of the granin protein family that regulates the biogenesis of secretory granules. Acts as a sorting receptor for intragranular proteins including chromogranin A/CHGA. May also play a role in angiogenesis. Promotes endothelial proliferation, migration and tube formation through MEK/ERK signaling pathway. The chain is Secretogranin-3 (Scg3) from Mus musculus (Mouse).